Reading from the N-terminus, the 729-residue chain is Polyribonucleotide nucleotidyltransferase (729 aa).

Residues aspartate 485 and aspartate 491 each coordinate Mg(2+). One can recognise a KH domain in the interval 552 to 611 (PRITTMKVAEDKIRTIIGKGGATIKGLIESTGVSIDIDDSGVIQLFSPDKMALEEAQKQI). In terms of domain architecture, S1 motif spans 621–689 (GQTYQGKVSK…KQGRVKLEWK (69 aa)). The interval 710 to 729 (TMEEQSEEINSGNKISEEEE) is disordered.

This sequence belongs to the polyribonucleotide nucleotidyltransferase family. As to quaternary structure, component of the RNA degradosome, which is a multiprotein complex involved in RNA processing and mRNA degradation. Mg(2+) is required as a cofactor.

Its subcellular location is the cytoplasm. The enzyme catalyses RNA(n+1) + phosphate = RNA(n) + a ribonucleoside 5'-diphosphate. Its function is as follows. Involved in mRNA degradation. Catalyzes the phosphorolysis of single-stranded polyribonucleotides processively in the 3'- to 5'-direction. The chain is Polyribonucleotide nucleotidyltransferase from Legionella pneumophila (strain Paris).